We begin with the raw amino-acid sequence, 556 residues long: Glutamine--tRNA ligase (556 aa).

The short motif at 34-44 (PEPNGFLHIGH) is the 'HIGH' region element. Residues 35 to 37 (EPN) and 41 to 47 (HIGHAKA) each bind ATP. Residues D67 and Y212 each contribute to the L-glutamine site. ATP is bound by residues T231, 261 to 262 (RL), and 269 to 271 (MSK). Residues 268-272 (LMSKR) carry the 'KMSKS' region motif.

Belongs to the class-I aminoacyl-tRNA synthetase family. In terms of assembly, monomer.

It localises to the cytoplasm. It carries out the reaction tRNA(Gln) + L-glutamine + ATP = L-glutaminyl-tRNA(Gln) + AMP + diphosphate. In Colwellia psychrerythraea (strain 34H / ATCC BAA-681) (Vibrio psychroerythus), this protein is Glutamine--tRNA ligase.